The chain runs to 376 residues: C2H2 type master regulator of conidiophore development brlA (376 aa).

Positions 20–29 (TSFSSASSSA) are enriched in low complexity. Disordered regions lie at residues 20 to 47 (TSFS…ELSL), 197 to 229 (HHHH…ASPN), and 241 to 267 (EAQR…PESG). The span at 34-44 (TPSSRRSTPNE) shows a compositional bias: polar residues. Over residues 197-209 (HHHHHNHHQHHHA) the composition is skewed to basic residues. The span at 219–229 (QLHSNTGASPN) shows a compositional bias: polar residues. Basic and acidic residues predominate over residues 241 to 256 (EAQRKTSELQRAQIRE). The C2H2-type 1; degenerate zinc-finger motif lies at 277 to 301 (CKCDYPGCNKAFRRNEHLKRHKQTF). A C2H2-type 2 zinc finger spans residues 309–332 (FSCEFCGKDQFNRQDNLNNHRKLH). Residues 351–376 (IIEHEERSRKRRAPPKSKAEKRDYDF) are disordered. The span at 367-376 (SKAEKRDYDF) shows a compositional bias: basic and acidic residues.

The protein resides in the nucleus. In terms of biological role, brlA, abaA and wetA are pivotal regulators of conidiophore development and conidium maturation. They act individually and together to regulate their own expression and that of numerous other sporulation-specific genes. Binds promoters of target genes at brlA response elements (BREs) containing the conserved sequence 5'-(C/A)(A/G)AGGG(G/A)-3'. This is C2H2 type master regulator of conidiophore development brlA from Hapsidospora chrysogena (Acremonium chrysogenum).